The primary structure comprises 605 residues: Replication protein E1 (605 aa).

The Nuclear localization signal signature appears at 76 to 78 (KRK). 2 positions are modified to phosphoserine; by host: Ser81 and Ser89. The Nuclear export signal signature appears at 88–97 (LSPRLESISL). Residues 145-308 (GSGDVDIHYT…TILGHKSAEA (164 aa)) form a DNA-binding region region. The 151-residue stretch at 407–557 (INFISFLAAL…FPMKADNTPQ (151 aa)) folds into the SF3 helicase domain. An ATP-binding site is contributed by 433–440 (GPPNTGKS). Residue Lys514 forms a Glycyl lysine isopeptide (Lys-Gly) (interchain with G-Cter in SUMO) linkage.

It belongs to the papillomaviridae E1 protein family. In terms of assembly, can form hexamers. Interacts with E2 protein; this interaction increases E1 DNA binding specificity. Interacts with host DNA polymerase subunit POLA2. Interacts with host single stranded DNA-binding protein RPA1. Interacts with host TOP1; this interaction stimulates the enzymatic activity of TOP1. Phosphorylated. In terms of processing, sumoylated.

The protein localises to the host nucleus. It catalyses the reaction Couples ATP hydrolysis with the unwinding of duplex DNA by translocating in the 3'-5' direction.. It carries out the reaction ATP + H2O = ADP + phosphate + H(+). ATP-dependent DNA 3'-5' helicase required for initiation of viral DNA replication. It forms a complex with the viral E2 protein. The E1-E2 complex binds to the replication origin which contains binding sites for both proteins. During the initial step, a dimer of E1 interacts with a dimer of protein E2 leading to a complex that binds the viral origin of replication with high specificity. Then, a second dimer of E1 displaces the E2 dimer in an ATP-dependent manner to form the E1 tetramer. Following this, two E1 monomers are added to each half of the site, which results in the formation of two E1 trimers on the viral ori. Subsequently, two hexamers will be created. The double hexamer acts as a bi-directional helicase machinery and unwinds the viral DNA and then recruits the host DNA polymerase to start replication. This is Replication protein E1 from Human papillomavirus 47.